Consider the following 489-residue polypeptide: Para-nitrobenzyl esterase (489 aa).

The active-site Acyl-ester intermediate is S189. At S189 the chain carries Phosphoserine. Catalysis depends on charge relay system residues E310 and H399.

Belongs to the type-B carboxylesterase/lipase family. As to quaternary structure, monomer.

Catalyzes hydrolysis of several beta-lactam antibiotic PNB esters to the corresponding free acid and PNB alcohol. In Bacillus subtilis (strain 168), this protein is Para-nitrobenzyl esterase (pnbA).